The primary structure comprises 92 residues: Small ribosomal subunit protein uS19 (92 aa).

It belongs to the universal ribosomal protein uS19 family.

Protein S19 forms a complex with S13 that binds strongly to the 16S ribosomal RNA. The sequence is that of Small ribosomal subunit protein uS19 (rpsS) from Geobacillus stearothermophilus (Bacillus stearothermophilus).